The following is a 656-amino-acid chain: Methionine--tRNA ligase (656 aa).

The 'HIGH' region signature appears at 11–21 (YYVNDIPHIGH). 4 residues coordinate Zn(2+): cysteine 126, cysteine 129, cysteine 147, and cysteine 150. Residues 301 to 305 (KMSKS) carry the 'KMSKS' region motif. Lysine 304 provides a ligand contact to ATP. Residues 555 to 656 (DFKKVEIKVG…REKIAGSLIS (102 aa)) form the tRNA-binding domain.

This sequence belongs to the class-I aminoacyl-tRNA synthetase family. MetG type 2A subfamily. As to quaternary structure, homodimer. Zn(2+) serves as cofactor.

It is found in the cytoplasm. The enzyme catalyses tRNA(Met) + L-methionine + ATP = L-methionyl-tRNA(Met) + AMP + diphosphate. Is required not only for elongation of protein synthesis but also for the initiation of all mRNA translation through initiator tRNA(fMet) aminoacylation. This chain is Methionine--tRNA ligase (metG), found in Helicobacter pylori (strain J99 / ATCC 700824) (Campylobacter pylori J99).